The following is a 444-amino-acid chain: tRNA modification GTPase MnmE (444 aa).

R21, E79, and K118 together coordinate (6S)-5-formyl-5,6,7,8-tetrahydrofolate. A TrmE-type G domain is found at 215-365 (GLNVVIVGKP…LVNEIKTNLK (151 aa)). Residue N225 participates in K(+) binding. Residues 225–230 (NVGKSS), 244–250 (SDIKGTT), and 269–272 (DTAG) each bind GTP. Residue S229 coordinates Mg(2+). Positions 244, 246, and 249 each coordinate K(+). T250 is a Mg(2+) binding site. Residue K444 participates in (6S)-5-formyl-5,6,7,8-tetrahydrofolate binding.

It belongs to the TRAFAC class TrmE-Era-EngA-EngB-Septin-like GTPase superfamily. TrmE GTPase family. Homodimer. Heterotetramer of two MnmE and two MnmG subunits. It depends on K(+) as a cofactor.

Its subcellular location is the cytoplasm. Exhibits a very high intrinsic GTPase hydrolysis rate. Involved in the addition of a carboxymethylaminomethyl (cmnm) group at the wobble position (U34) of certain tRNAs, forming tRNA-cmnm(5)s(2)U34. This chain is tRNA modification GTPase MnmE, found in Malacoplasma penetrans (strain HF-2) (Mycoplasma penetrans).